The primary structure comprises 394 residues: Transcriptional regulator Myc-1 (394 aa).

O-linked (GlcNAc) threonine glycosylation is present at threonine 58. A 9aaTAD motif is present at residues 76 to 84 (EMVSEFLGD). Disordered stretches follow at residues 177–247 (SGKS…SRYP) and 283–318 (EASSNSNSRHVKQRKCTSPRTSDSEDNDKRRTHNVL). Residues 205 to 226 (DSEEEEEEEEEEEEEEEEEEID) are compositionally biased toward acidic residues. The span at 229-238 (TVEKRQKKNE) shows a compositional bias: basic and acidic residues. The 53-residue stretch at 310–362 (DKRRTHNVLERQRRNELKLSFFALRDEIPDVANNEKAAKVVILKKATECIHSM) folds into the bHLH domain. The tract at residues 369–390 (LLSIKEQLRRKSEQLKHRLQLL) is leucine-zipper.

Efficient DNA binding requires dimerization with another bHLH protein. Binds DNA as a heterodimer with MAX.

Its subcellular location is the nucleus. In terms of biological role, transcription factor that binds DNA in a non-specific manner, yet also specifically recognizes the core sequence 5'-CAC[GA]TG-3'. Activates the transcription of growth-related genes. The protein is Transcriptional regulator Myc-1 (myca) of Cyprinus carpio (Common carp).